Here is an 892-residue protein sequence, read N- to C-terminus: Leucine--tRNA ligase (892 aa).

The 'HIGH' region motif lies at 42–52 (PYPSGKLHMGH). A 'KMSKS' region motif is present at residues 640–644 (TMSKS). An ATP-binding site is contributed by K643.

It belongs to the class-I aminoacyl-tRNA synthetase family.

Its subcellular location is the cytoplasm. The catalysed reaction is tRNA(Leu) + L-leucine + ATP = L-leucyl-tRNA(Leu) + AMP + diphosphate. This is Leucine--tRNA ligase from Albidiferax ferrireducens (strain ATCC BAA-621 / DSM 15236 / T118) (Rhodoferax ferrireducens).